A 506-amino-acid polypeptide reads, in one-letter code: Phase 2 flagellin (506 aa).

Belongs to the bacterial flagellin family.

Its subcellular location is the secreted. It localises to the bacterial flagellum. In terms of biological role, flagellin is the subunit protein which polymerizes to form the filaments of bacterial flagella. The protein is Phase 2 flagellin (fljB) of Salmonella typhimurium (strain LT2 / SGSC1412 / ATCC 700720).